A 146-amino-acid chain; its full sequence is Hemoglobin subunit beta (146 aa).

Residue Val-1 is modified to N-acetylvaline. Residues 2–146 (HLTADEKAAV…VANALAHKYH (145 aa)) enclose the Globin domain. Thr-12 is subject to Phosphothreonine. Ser-44 bears the Phosphoserine mark. Position 59 is an N6-acetyllysine (Lys-59). His-63 is a binding site for heme b. Lys-82 is subject to N6-acetyllysine. A heme b-binding site is contributed by His-92. Cys-93 carries the post-translational modification S-nitrosocysteine. The residue at position 144 (Lys-144) is an N6-acetyllysine.

Belongs to the globin family. In terms of assembly, heterotetramer of two alpha chains and two beta chains. As to expression, red blood cells.

In terms of biological role, involved in oxygen transport from the lung to the various peripheral tissues. In Odobenus rosmarus divergens (Pacific walrus), this protein is Hemoglobin subunit beta (HBB).